Reading from the N-terminus, the 463-residue chain is Chromosomal replication initiator protein DnaA (463 aa).

The tract at residues 1-83 is domain I, interacts with DnaA modulators; sequence MNTNQIILTD…LQLFQHYNNT (83 aa). The interval 83 to 124 is domain II; it reads TIKSIDIITKELPGTTQTVIELPTKTFADIGSSELNSENIFS. The segment at 125-343 is domain III, AAA+ region; sequence TLDVRFTFDN…GALNKVIAHS (219 aa). Residues Gly171, Gly173, Lys174, and Thr175 each contribute to the ATP site. The interval 344-463 is domain IV, binds dsDNA; the sequence is NFTLKEITLE…INLLMKILQH (120 aa).

Belongs to the DnaA family. In terms of assembly, oligomerizes as a right-handed, spiral filament on DNA at oriC.

Its subcellular location is the cytoplasm. In terms of biological role, plays an essential role in the initiation and regulation of chromosomal replication. ATP-DnaA binds to the origin of replication (oriC) to initiate formation of the DNA replication initiation complex once per cell cycle. Binds the DnaA box (a 9 base pair repeat at the origin) and separates the double-stranded (ds)DNA. Forms a right-handed helical filament on oriC DNA; dsDNA binds to the exterior of the filament while single-stranded (ss)DNA is stabiized in the filament's interior. The ATP-DnaA-oriC complex binds and stabilizes one strand of the AT-rich DNA unwinding element (DUE), permitting loading of DNA polymerase. After initiation quickly degrades to an ADP-DnaA complex that is not apt for DNA replication. Binds acidic phospholipids. The polypeptide is Chromosomal replication initiator protein DnaA (Rickettsia akari (strain Hartford)).